Consider the following 305-residue polypeptide: GMP synthase [glutamine-hydrolyzing] subunit B (305 aa).

The region spanning 2–185 is the GMPS ATP-PPase domain; that stretch reads VDVDSFVEDA…LGLEEIISER (184 aa). 29 to 35 is an ATP binding site; it reads SGGVDSS.

As to quaternary structure, heterodimer composed of a glutamine amidotransferase subunit (A) and a GMP-binding subunit (B).

It carries out the reaction XMP + L-glutamine + ATP + H2O = GMP + L-glutamate + AMP + diphosphate + 2 H(+). It participates in purine metabolism; GMP biosynthesis; GMP from XMP (L-Gln route): step 1/1. In terms of biological role, catalyzes the synthesis of GMP from XMP. The chain is GMP synthase [glutamine-hydrolyzing] subunit B from Halobacterium salinarum (strain ATCC 29341 / DSM 671 / R1).